A 742-amino-acid chain; its full sequence is Phosphoribosylformylglycinamidine synthase subunit PurL (742 aa).

Residue H54 is part of the active site. Residues Y57 and K96 each contribute to the ATP site. E98 provides a ligand contact to Mg(2+). Substrate is bound by residues 99-102 and R121; that span reads SHNH. Residue H100 is the Proton acceptor of the active site. D122 lines the Mg(2+) pocket. Q245 is a substrate binding site. D273 is a binding site for Mg(2+). Position 317-319 (317-319) interacts with substrate; that stretch reads ESQ. The ATP site is built by D500 and G537. N538 lines the Mg(2+) pocket. S540 is a binding site for substrate.

It belongs to the FGAMS family. In terms of assembly, monomer. Part of the FGAM synthase complex composed of 1 PurL, 1 PurQ and 2 PurS subunits.

The protein localises to the cytoplasm. It carries out the reaction N(2)-formyl-N(1)-(5-phospho-beta-D-ribosyl)glycinamide + L-glutamine + ATP + H2O = 2-formamido-N(1)-(5-O-phospho-beta-D-ribosyl)acetamidine + L-glutamate + ADP + phosphate + H(+). Its pathway is purine metabolism; IMP biosynthesis via de novo pathway; 5-amino-1-(5-phospho-D-ribosyl)imidazole from N(2)-formyl-N(1)-(5-phospho-D-ribosyl)glycinamide: step 1/2. Part of the phosphoribosylformylglycinamidine synthase complex involved in the purines biosynthetic pathway. Catalyzes the ATP-dependent conversion of formylglycinamide ribonucleotide (FGAR) and glutamine to yield formylglycinamidine ribonucleotide (FGAM) and glutamate. The FGAM synthase complex is composed of three subunits. PurQ produces an ammonia molecule by converting glutamine to glutamate. PurL transfers the ammonia molecule to FGAR to form FGAM in an ATP-dependent manner. PurS interacts with PurQ and PurL and is thought to assist in the transfer of the ammonia molecule from PurQ to PurL. The polypeptide is Phosphoribosylformylglycinamidine synthase subunit PurL (Geobacillus sp. (strain WCH70)).